A 344-amino-acid polypeptide reads, in one-letter code: GTP 3',8-cyclase (344 aa).

Positions 19–239 (PFGRTIDYLR…ANYTLTDLPD (221 aa)) constitute a Radical SAM core domain. Arg-28 is a binding site for GTP. [4Fe-4S] cluster contacts are provided by Cys-35 and Cys-39. Tyr-41 lines the S-adenosyl-L-methionine pocket. Cys-42 is a binding site for [4Fe-4S] cluster. Arg-77 provides a ligand contact to GTP. Gly-81 lines the S-adenosyl-L-methionine pocket. Position 111 (Thr-111) interacts with GTP. Ser-135 contacts S-adenosyl-L-methionine. Lys-171 serves as a coordination point for GTP. Met-205 contributes to the S-adenosyl-L-methionine binding site. [4Fe-4S] cluster-binding residues include Cys-268 and Cys-271. Residue 273–275 (RVR) coordinates GTP. Cys-285 contacts [4Fe-4S] cluster.

The protein belongs to the radical SAM superfamily. MoaA family. Monomer and homodimer. [4Fe-4S] cluster serves as cofactor.

It catalyses the reaction GTP + AH2 + S-adenosyl-L-methionine = (8S)-3',8-cyclo-7,8-dihydroguanosine 5'-triphosphate + 5'-deoxyadenosine + L-methionine + A + H(+). It functions in the pathway cofactor biosynthesis; molybdopterin biosynthesis. Functionally, catalyzes the cyclization of GTP to (8S)-3',8-cyclo-7,8-dihydroguanosine 5'-triphosphate. The sequence is that of GTP 3',8-cyclase from Rhodopseudomonas palustris (strain ATCC BAA-98 / CGA009).